The chain runs to 189 residues: Cell division protein SepF (189 aa).

The disordered stretch occupies residues 18-64; the sequence is EVTDHEDVAKERPVKVQKTEQTPSQQQRKPERPQETVPPRRQHIKSD. Residues 22–35 show a composition bias toward basic and acidic residues; it reads HEDVAKERPVKVQK.

It belongs to the SepF family. As to quaternary structure, homodimer. Interacts with FtsZ.

Its subcellular location is the cytoplasm. In terms of biological role, cell division protein that is part of the divisome complex and is recruited early to the Z-ring. Probably stimulates Z-ring formation, perhaps through the cross-linking of FtsZ protofilaments. Its function overlaps with FtsA. The protein is Cell division protein SepF of Streptococcus thermophilus (strain ATCC BAA-250 / LMG 18311).